Here is a 141-residue protein sequence, read N- to C-terminus: MQLTSFTDYALRTLIYLASLPDNEQTNITDVTELFGVSRNHMVKVINRLGQLNYIQTVRGKNGGIRLNRPAKTILVGEVVRDLEPLDLVNCSVEFCHITPACRLKERLYRAKLAFLAELDDCSIAELLDDNAELLILLQKA.

The region spanning 2–129 (QLTSFTDYAL…DDCSIAELLD (128 aa)) is the HTH rrf2-type domain. A DNA-binding region (H-T-H motif) is located at residues 28 to 51 (ITDVTELFGVSRNHMVKVINRLGQ). [2Fe-2S] cluster contacts are provided by Cys-91, Cys-96, and Cys-102.

[2Fe-2S] cluster is required as a cofactor.

Its function is as follows. Nitric oxide-sensitive repressor of genes involved in protecting the cell against nitrosative stress. May require iron for activity. This Vibrio vulnificus (strain CMCP6) protein is HTH-type transcriptional repressor NsrR.